Reading from the N-terminus, the 228-residue chain is L-ribulose-5-phosphate 4-epimerase UlaF (228 aa).

Residues 26–27 (GN), 43–44 (SG), and 72–73 (SS) contribute to the substrate site. 3 residues coordinate Zn(2+): Asp74, His93, and His95. Asp118 serves as the catalytic Proton donor/acceptor. His167 serves as a coordination point for Zn(2+). Tyr225 (proton donor/acceptor) is an active-site residue.

The protein belongs to the aldolase class II family. AraD/FucA subfamily. Zn(2+) serves as cofactor.

The catalysed reaction is L-ribulose 5-phosphate = D-xylulose 5-phosphate. The protein operates within cofactor degradation; L-ascorbate degradation; D-xylulose 5-phosphate from L-ascorbate: step 4/4. Functionally, catalyzes the isomerization of L-ribulose 5-phosphate to D-xylulose 5-phosphate. Is involved in the anaerobic L-ascorbate utilization. This chain is L-ribulose-5-phosphate 4-epimerase UlaF, found in Escherichia coli O17:K52:H18 (strain UMN026 / ExPEC).